A 248-amino-acid chain; its full sequence is tRNA uridine(34) hydroxylase (248 aa).

The Rhodanese domain maps to 127-221 (RGRPLVLLDT…YFEEVGGEGY (95 aa)). C181 (cysteine persulfide intermediate) is an active-site residue.

It belongs to the TrhO family.

It catalyses the reaction uridine(34) in tRNA + AH2 + O2 = 5-hydroxyuridine(34) in tRNA + A + H2O. Its function is as follows. Catalyzes oxygen-dependent 5-hydroxyuridine (ho5U) modification at position 34 in tRNAs. This Xanthomonas axonopodis pv. citri (strain 306) protein is tRNA uridine(34) hydroxylase.